The primary structure comprises 587 residues: 5-aminolevulinate synthase, erythroid-specific, mitochondrial (587 aa).

The N-terminal 49 residues, 1-49 (MVTAAMLLQCCPVPARGPTSLLGKVVKTHQFLFGIGRCPILATQGPNCS), are a transit peptide targeting the mitochondrion. Arg163 is a binding site for succinyl-CoA. Pyridoxal 5'-phosphate contacts are provided by Cys258 and Phe259. Residues Ser280 and Lys299 each coordinate succinyl-CoA. Pyridoxal 5'-phosphate is bound by residues Ser332, His360, and Thr388. Residue Lys391 is part of the active site. Lys391 carries the post-translational modification N6-(pyridoxal phosphate)lysine. Thr420 and Thr421 together coordinate pyridoxal 5'-phosphate. Thr508 provides a ligand contact to succinyl-CoA.

It belongs to the class-II pyridoxal-phosphate-dependent aminotransferase family. In terms of assembly, homodimer. Interacts with SUCLA2. Pyridoxal 5'-phosphate is required as a cofactor.

It is found in the mitochondrion inner membrane. It carries out the reaction succinyl-CoA + glycine + H(+) = 5-aminolevulinate + CO2 + CoA. Its pathway is porphyrin-containing compound metabolism; protoporphyrin-IX biosynthesis; 5-aminolevulinate from glycine: step 1/1. In terms of biological role, catalyzes the pyridoxal 5'-phosphate (PLP)-dependent condensation of succinyl-CoA and glycine to form aminolevulinic acid (ALA), with CoA and CO2 as by-products. Contributes significantly to heme formation during erythropoiesis. This is 5-aminolevulinate synthase, erythroid-specific, mitochondrial (ALAS2) from Pongo abelii (Sumatran orangutan).